We begin with the raw amino-acid sequence, 91 residues long: MQPTRVLFKRSVWKGPHIVPLPIQRPEPGKKIAPIRTQARSATILPNFVGLKFQVHNGKDYIDLTVTEEMVGHKLGEFSATRKPFIWGKKK.

This sequence belongs to the universal ribosomal protein uS19 family. In terms of assembly, component of the mitochondrial small ribosomal subunit (mt-SSU). Mature N.crassa 74S mitochondrial ribosomes consist of a small (37S) and a large (54S) subunit. The 37S small subunit contains a 16S ribosomal RNA (16S mt-rRNA) and 32 different proteins. The 54S large subunit contains a 23S rRNA (23S mt-rRNA) and 42 different proteins.

The protein localises to the mitochondrion. Functionally, component of the mitochondrial ribosome (mitoribosome), a dedicated translation machinery responsible for the synthesis of mitochondrial genome-encoded proteins, including at least some of the essential transmembrane subunits of the mitochondrial respiratory chain. The mitoribosomes are attached to the mitochondrial inner membrane and translation products are cotranslationally integrated into the membrane. This chain is Small ribosomal subunit protein uS19m (rsm19), found in Neurospora crassa (strain ATCC 24698 / 74-OR23-1A / CBS 708.71 / DSM 1257 / FGSC 987).